The following is a 246-amino-acid chain: Uridylate kinase (246 aa).

Residue K10–G13 participates in ATP binding. G52 lines the UMP pocket. ATP-binding residues include G53 and R57. UMP-binding positions include D72 and T133–T140. 3 residues coordinate ATP: T160, Y166, and D169.

The protein belongs to the UMP kinase family. Homohexamer.

The protein localises to the cytoplasm. It carries out the reaction UMP + ATP = UDP + ADP. It participates in pyrimidine metabolism; CTP biosynthesis via de novo pathway; UDP from UMP (UMPK route): step 1/1. Inhibited by UTP. Catalyzes the reversible phosphorylation of UMP to UDP. The polypeptide is Uridylate kinase (Halorhodospira halophila (strain DSM 244 / SL1) (Ectothiorhodospira halophila (strain DSM 244 / SL1))).